A 473-amino-acid polypeptide reads, in one-letter code: Peptidoglycan DL-endopeptidase CwlO (473 aa).

A signal peptide spans 1 to 30; sequence MRKSLITLGLASVIGTSSFLIPFTSKTASA. 3 disordered regions span residues 31 to 52, 79 to 98, and 237 to 337; these read ETLDEKKQKIESKQSEVASSIE, ALDTSNKIEDKKEENDKTKE, and EASE…GTVI. Residues 33–44 are compositionally biased toward basic and acidic residues; sequence LDEKKQKIESKQ. The segment covering 241–250 has biased composition (polar residues); sequence LANQKANTEA. Basic and acidic residues-rich tracts occupy residues 251 to 260 and 267 to 277; these read EQARIKKEQE and KKQEEAQKASD. A compositionally biased stretch (low complexity) spans 291-337; sequence SSKASSSDDSSDNSSDNSSNGSSNSSSNGSSSKKSSGSNSNSGGTVI. In terms of domain architecture, NlpC/P60 spans 340–471; that stretch reads SGGIEGAISV…AAFKGVVRRV (132 aa). Residue C377 is the Nucleophile of the active site. Catalysis depends on H431, which acts as the Proton acceptor. Residue N443 is part of the active site.

The protein belongs to the peptidase C40 family. Identified in the extracellular proteome as a number of processing products of about 50 and 30 kDa.

Its subcellular location is the secreted. The protein resides in the cell wall. Its activity is regulated as follows. Detected in exponentially growing cells, the 50 and 30 kDa processing products disappear upon entry into stationary phase with the concomitant appearance of a 20 kDa products. The 50 kDa form persists in the absence of extracellular proteases. The C-terminal part of CwlO shows a cell wall hydrolytic DL-endopeptidase activity. The polypeptide is Peptidoglycan DL-endopeptidase CwlO (cwlO) (Bacillus subtilis (strain 168)).